We begin with the raw amino-acid sequence, 87 residues long: Large ribosomal subunit protein eL31 (87 aa).

Belongs to the eukaryotic ribosomal protein eL31 family.

In Methanocorpusculum labreanum (strain ATCC 43576 / DSM 4855 / Z), this protein is Large ribosomal subunit protein eL31.